The sequence spans 1208 residues: DNA-directed RNA polymerase subunit beta (1208 aa).

It belongs to the RNA polymerase beta chain family. In terms of assembly, the RNAP catalytic core consists of 2 alpha, 1 beta, 1 beta' and 1 omega subunit. When a sigma factor is associated with the core the holoenzyme is formed, which can initiate transcription.

The catalysed reaction is RNA(n) + a ribonucleoside 5'-triphosphate = RNA(n+1) + diphosphate. Functionally, DNA-dependent RNA polymerase catalyzes the transcription of DNA into RNA using the four ribonucleoside triphosphates as substrates. The protein is DNA-directed RNA polymerase subunit beta of Enterococcus faecium (Streptococcus faecium).